Reading from the N-terminus, the 158-residue chain is Endoribonuclease YbeY (158 aa).

Zn(2+) contacts are provided by His-124, His-128, and His-134.

This sequence belongs to the endoribonuclease YbeY family. Zn(2+) is required as a cofactor.

The protein localises to the cytoplasm. Single strand-specific metallo-endoribonuclease involved in late-stage 70S ribosome quality control and in maturation of the 3' terminus of the 16S rRNA. This Latilactobacillus sakei subsp. sakei (strain 23K) (Lactobacillus sakei subsp. sakei) protein is Endoribonuclease YbeY.